We begin with the raw amino-acid sequence, 101 residues long: Ascorbate-specific PTS system EIIB component (101 aa).

Positions 3–96 constitute a PTS EIIB type-2 domain; the sequence is VRILAVCGNG…KLLKVIKEHF (94 aa). The active-site Phosphocysteine intermediate is Cys9. Cys9 bears the Phosphocysteine mark.

The protein localises to the cytoplasm. The catalysed reaction is N(pros)-phospho-L-histidyl-[protein] + L-ascorbate(out) = L-ascorbate 6-phosphate(in) + L-histidyl-[protein]. In terms of biological role, the phosphoenolpyruvate-dependent sugar phosphotransferase system (sugar PTS), a major carbohydrate active transport system, catalyzes the phosphorylation of incoming sugar substrates concomitantly with their translocation across the cell membrane. The enzyme II UlaABC PTS system is involved in ascorbate transport. In Shigella dysenteriae serotype 1 (strain Sd197), this protein is Ascorbate-specific PTS system EIIB component (ulaB).